An 80-amino-acid chain; its full sequence is Defensin-like protein 1 (80 aa).

The N-terminal stretch at 1–29 (MAKFASIIALLFAALVLFAAFEAPTMVEA) is a signal peptide. The residue at position 30 (Q30) is a Pyrrolidone carboxylic acid. 4 disulfides stabilise this stretch: C33–C80, C44–C65, C50–C74, and C54–C76.

Belongs to the DEFL family. Forms oligomers in its native state.

It is found in the secreted. Functionally, possesses antifungal activity sensitive to inorganic cations. This chain is Defensin-like protein 1 (AFP1), found in Raphanus sativus (Radish).